The sequence spans 57 residues: Large ribosomal subunit protein bL33 (57 aa).

Belongs to the bacterial ribosomal protein bL33 family.

In Shewanella sp. (strain MR-4), this protein is Large ribosomal subunit protein bL33.